The following is a 164-amino-acid chain: Large ribosomal subunit protein uL10 (164 aa).

It belongs to the universal ribosomal protein uL10 family. Part of the ribosomal stalk of the 50S ribosomal subunit. The N-terminus interacts with L11 and the large rRNA to form the base of the stalk. The C-terminus forms an elongated spine to which L12 dimers bind in a sequential fashion forming a multimeric L10(L12)X complex.

Forms part of the ribosomal stalk, playing a central role in the interaction of the ribosome with GTP-bound translation factors. The protein is Large ribosomal subunit protein uL10 of Pseudoalteromonas translucida (strain TAC 125).